Consider the following 107-residue polypeptide: Alpha-elapitoxin-Al2a (107 aa).

The N-terminal stretch at 1 to 21 is a signal peptide; sequence MKTLLLTLVVVTIVCLDLGDS. 5 cysteine pairs are disulfide-bonded: C24–C41, C34–C62, C47–C51, C66–C77, and C78–C83.

This sequence belongs to the three-finger toxin family. Long-chain subfamily. Type II alpha-neurotoxin sub-subfamily. Expressed by the venom gland.

The protein resides in the secreted. Its function is as follows. Binds with high affinity to muscular (alpha-1/CHRNA1) and neuronal (alpha-7/CHRNA7) nicotinic acetylcholine receptor (nAChR) and inhibits acetylcholine from binding to the receptor, thereby impairing neuromuscular and neuronal transmission. The sequence is that of Alpha-elapitoxin-Al2a from Austrelaps labialis (Pygmy copperhead).